Here is a 440-residue protein sequence, read N- to C-terminus: Ran-specific GTPase-activating protein 30 (440 aa).

The 314-residue stretch at 1–314 (MDEILAKAGS…LVLKIDRSDD (314 aa)) folds into the RanBD1 domain. At Thr-272 the chain carries Phosphothreonine. The span at 341 to 371 (IEEDEEEDEEEDEEEGKDGEERKEEEEEENK) shows a compositional bias: acidic residues. Residues 341–375 (IEEDEEEDEEEDEEEGKDGEERKEEEEEENKLEDK) are disordered.

In terms of assembly, interacts with GSP1.

It is found in the cytoplasm. Its subcellular location is the nucleus. Its function is as follows. Important for the export of protein containing nuclear export signal (NES) out of the nucleus. Stimulates the GTPase activity of GSP1. The sequence is that of Ran-specific GTPase-activating protein 30 (YRB30) from Saccharomyces cerevisiae (strain ATCC 204508 / S288c) (Baker's yeast).